A 63-amino-acid polypeptide reads, in one-letter code: Protein D-63 (63 aa).

In terms of assembly, homodimer.

Its function is as follows. This protein may be involved in virus assembly. The polypeptide is Protein D-63 (Saccharolobus solfataricus (Sulfolobus solfataricus)).